Reading from the N-terminus, the 131-residue chain is Protein TAP2 (131 aa).

Residues 1–22 (MAKSSPTYTVLFLLGLLALSTA) form the signal peptide. The segment at 75 to 101 (ARSGGETDVKKMEGSMPDQGKTAGRDQ) is disordered.

In terms of tissue distribution, tapetum of anthers.

The sequence is that of Protein TAP2 (TAP2) from Antirrhinum majus (Garden snapdragon).